We begin with the raw amino-acid sequence, 963 residues long: Protein translocase subunit SecA (963 aa).

Residues glutamine 87, 105–109 (GEGKT), and aspartate 524 each bind ATP. Residues cysteine 946, cysteine 948, cysteine 957, and histidine 958 each contribute to the Zn(2+) site.

Belongs to the SecA family. As to quaternary structure, monomer and homodimer. Part of the essential Sec protein translocation apparatus which comprises SecA, SecYEG and auxiliary proteins SecDF-YajC and YidC. The cofactor is Zn(2+).

The protein localises to the cell inner membrane. The protein resides in the cytoplasm. The catalysed reaction is ATP + H2O + cellular proteinSide 1 = ADP + phosphate + cellular proteinSide 2.. Its function is as follows. Part of the Sec protein translocase complex. Interacts with the SecYEG preprotein conducting channel. Has a central role in coupling the hydrolysis of ATP to the transfer of proteins into and across the cell membrane, serving both as a receptor for the preprotein-SecB complex and as an ATP-driven molecular motor driving the stepwise translocation of polypeptide chains across the membrane. The protein is Protein translocase subunit SecA of Methylobacterium radiotolerans (strain ATCC 27329 / DSM 1819 / JCM 2831 / NBRC 15690 / NCIMB 10815 / 0-1).